Reading from the N-terminus, the 217-residue chain is Uracil-DNA glycosylase (217 aa).

Asp-62 (proton acceptor) is an active-site residue.

Belongs to the uracil-DNA glycosylase (UDG) superfamily. UNG family.

The protein resides in the cytoplasm. The enzyme catalyses Hydrolyzes single-stranded DNA or mismatched double-stranded DNA and polynucleotides, releasing free uracil.. Excises uracil residues from the DNA which can arise as a result of misincorporation of dUMP residues by DNA polymerase or due to deamination of cytosine. This Streptococcus pyogenes serotype M3 (strain ATCC BAA-595 / MGAS315) protein is Uracil-DNA glycosylase.